The sequence spans 86 residues: Synergistic-like venom protein (86 aa).

The N-terminal stretch at 1 to 21 (MKTLLLTLVVVTIVCLDLGYT) is a signal peptide. Disulfide bonds link Cys24–Cys45, Cys38–Cys63, Cys67–Cys78, and Cys79–Cys84.

The protein belongs to the three-finger toxin family. Short-chain subfamily. Aminergic toxin sub-subfamily. As to expression, expressed by the venom gland.

The protein localises to the secreted. The sequence is that of Synergistic-like venom protein from Dendroaspis angusticeps (Eastern green mamba).